The sequence spans 351 residues: Succinylglutamate desuccinylase (351 aa).

Zn(2+)-binding residues include histidine 73, glutamate 76, and histidine 168. The active site involves glutamate 231.

Belongs to the AspA/AstE family. Succinylglutamate desuccinylase subfamily. Zn(2+) is required as a cofactor.

It catalyses the reaction N-succinyl-L-glutamate + H2O = L-glutamate + succinate. The protein operates within amino-acid degradation; L-arginine degradation via AST pathway; L-glutamate and succinate from L-arginine: step 5/5. Functionally, transforms N(2)-succinylglutamate into succinate and glutamate. This chain is Succinylglutamate desuccinylase, found in Burkholderia lata (strain ATCC 17760 / DSM 23089 / LMG 22485 / NCIMB 9086 / R18194 / 383).